The primary structure comprises 177 residues: Large ribosomal subunit protein uL10 (177 aa).

The protein belongs to the universal ribosomal protein uL10 family. As to quaternary structure, part of the ribosomal stalk of the 50S ribosomal subunit. The N-terminus interacts with L11 and the large rRNA to form the base of the stalk. The C-terminus forms an elongated spine to which L12 dimers bind in a sequential fashion forming a multimeric L10(L12)X complex.

Forms part of the ribosomal stalk, playing a central role in the interaction of the ribosome with GTP-bound translation factors. The protein is Large ribosomal subunit protein uL10 of Kocuria rhizophila (strain ATCC 9341 / DSM 348 / NBRC 103217 / DC2201).